Reading from the N-terminus, the 61-residue chain is Transcription elongation factor Spt4 (61 aa).

4 residues coordinate Zn(2+): Cys6, Cys9, Cys18, and Cys21.

The protein belongs to the archaeal Spt4 family. As to quaternary structure, heterodimer composed of Spt4 and Spt5.

Stimulates transcription elongation. This chain is Transcription elongation factor Spt4, found in Pyrococcus furiosus (strain ATCC 43587 / DSM 3638 / JCM 8422 / Vc1).